The sequence spans 431 residues: Saglin (431 aa).

Residues 1-39 (MSVRGYSGVQVISSRKHRSMSRLPTVLLLLASAAVLAAG) form the signal peptide. N95 carries an N-linked (GlcNAc...) asparagine glycan. A coiled-coil region spans residues 120 to 169 (LDDAQRQMEQEHRQYAATLEEQLHAAQQETQQEQEMKKALQKQLDALTDS).

As to quaternary structure, homodimer; disulfide-linked. (Microbial infection) Interacts with Plasmodium berghei TRAP (via integrin-like A-domain); the interaction probably promotes sporozoite invasion of salivary gland. As to expression, female saliva (at protein level). Female salivary gland (at protein level).

The protein localises to the secreted. (Microbial infection) Facilitates invasion of mosquito salivary glands by Plasmodium yoelii sporozoites. Its function is as follows. (Microbial infection) Facilitates invasion of mosquito salivary glands by Plasmodium falciparum sporozoites. In terms of biological role, (Microbial infection) Probably facilitates invasion of mosquito salivary glands by Plasmodium berghei sporozoites. The chain is Saglin from Anopheles gambiae (African malaria mosquito).